A 790-amino-acid chain; its full sequence is Lon protease (790 aa).

A Lon N-terminal domain is found at 23 to 220 (LPIMPIFHTV…EITLIVNHQL (198 aa)). An ATP-binding site is contributed by 372 to 379 (GPPGTGKT). The Lon proteolytic domain maps to 608–789 (ISKPGIAMGL…REVLNIALSR (182 aa)). Active-site residues include serine 695 and lysine 738.

The protein belongs to the peptidase S16 family. As to quaternary structure, homohexamer. Organized in a ring with a central cavity.

The protein localises to the cytoplasm. The catalysed reaction is Hydrolysis of proteins in presence of ATP.. ATP-dependent serine protease that mediates the selective degradation of mutant and abnormal proteins as well as certain short-lived regulatory proteins. Required for cellular homeostasis and for survival from DNA damage and developmental changes induced by stress. Degrades polypeptides processively to yield small peptide fragments that are 5 to 10 amino acids long. Binds to DNA in a double-stranded, site-specific manner. This is Lon protease from Syntrophus aciditrophicus (strain SB).